The chain runs to 149 residues: Large ribosomal subunit protein uL15 (149 aa).

Positions 14-57 (KQRKRVGRGSGSGWGCTSGKGNKGQNARSGGGVRPGFEGGQMPL) are disordered. 2 stretches are compositionally biased toward gly residues: residues 21–35 (RGSG…GKGN) and 42–52 (SGGGVRPGFEG).

It belongs to the universal ribosomal protein uL15 family. As to quaternary structure, part of the 50S ribosomal subunit.

Functionally, binds to the 23S rRNA. This Oleidesulfovibrio alaskensis (strain ATCC BAA-1058 / DSM 17464 / G20) (Desulfovibrio alaskensis) protein is Large ribosomal subunit protein uL15.